The chain runs to 257 residues: Ribonuclease HII (257 aa).

The RNase H type-2 domain maps to E70–N257. The a divalent metal cation site is built by D76, E77, and D168.

It belongs to the RNase HII family. The cofactor is Mn(2+). It depends on Mg(2+) as a cofactor.

It localises to the cytoplasm. It carries out the reaction Endonucleolytic cleavage to 5'-phosphomonoester.. Functionally, endonuclease that specifically degrades the RNA of RNA-DNA hybrids. This Streptococcus suis (strain 98HAH33) protein is Ribonuclease HII.